Here is a 318-residue protein sequence, read N- to C-terminus: Olfactory receptor 13C2 (318 aa).

Residues 1–25 lie on the Extracellular side of the membrane; that stretch reads MEWENHTILVEFFLKGLSGHPRLEL. A glycan (N-linked (GlcNAc...) asparagine) is linked at asparagine 5. Residues 26–46 traverse the membrane as a helical segment; the sequence is LFFVLIFIMYVVILLGNGTLI. The Cytoplasmic portion of the chain corresponds to 47–54; the sequence is LISILDPH. A helical membrane pass occupies residues 55 to 75; it reads LHTPMYFFLGNLSFLDICYTT. The Extracellular segment spans residues 76-99; sequence TSIPSTLVSFLSERKTISLSGCAV. An intrachain disulfide couples cysteine 97 to cysteine 189. The chain crosses the membrane as a helical span at residues 100–120; sequence QMFLGLAMGTTECVLLGMMAF. Residues 121–139 lie on the Cytoplasmic side of the membrane; the sequence is DRYVAICNPLRYPIIMSKD. The helical transmembrane segment at 140–160 threads the bilayer; that stretch reads AYVPMAAGSWIIGAVNSAVQS. Residues 161-197 lie on the Extracellular side of the membrane; sequence VFVVQLPFCRNNIINHFTCEILAVMKLACADISDNEF. The chain crosses the membrane as a helical span at residues 198–217; sequence IMLVATTLFILTPLLLIIVS. Over 218–237 the chain is Cytoplasmic; sequence YTLIIVSIFKISSSEGRSKA. Residues 238-258 traverse the membrane as a helical segment; that stretch reads SSTCSAHLTVVIIFYGTILFM. The Extracellular segment spans residues 259-277; it reads YMKPKSKETLNSDDLDATD. The chain crosses the membrane as a helical span at residues 278–298; the sequence is KIISMFYGVMTPMMNPLIYSL. Residues 299 to 318 lie on the Cytoplasmic side of the membrane; the sequence is RNKDVKEAVKHLLNRRFFSK.

Belongs to the G-protein coupled receptor 1 family.

The protein resides in the cell membrane. Its function is as follows. Odorant receptor. The protein is Olfactory receptor 13C2 (OR13C2) of Homo sapiens (Human).